The primary structure comprises 598 residues: Arginine--tRNA ligase (598 aa).

Residues 139–149 (ANPTGPMHVGH) carry the 'HIGH' region motif.

The protein belongs to the class-I aminoacyl-tRNA synthetase family. As to quaternary structure, monomer.

Its subcellular location is the cytoplasm. It catalyses the reaction tRNA(Arg) + L-arginine + ATP = L-arginyl-tRNA(Arg) + AMP + diphosphate. This chain is Arginine--tRNA ligase, found in Bradyrhizobium sp. (strain BTAi1 / ATCC BAA-1182).